A 221-amino-acid chain; its full sequence is Pre-hexon-linking protein VIII (221 aa).

At T65 the chain carries Phosphothreonine; by host. The propeptide occupies 113 to 150; it reads AAPWSGVKTGSFCGRGLQLAEPPTTAIYPSGLFHLGRG.

It belongs to the adenoviridae hexon-linking protein family. As to quaternary structure, interacts with the peripentonal hexons as well as the hexons in the facets. Part of a complex composed of the core-capsid bridging protein, the endosome lysis protein VI and the hexon-linking protein VIII; these interactions bridge the virus core to the capsid. Post-translationally, cleaved by the viral protease during virion maturation. May cause the middle segment to be shed from the capsid.

The protein resides in the virion. It is found in the host nucleus. Its function is as follows. Structural component of the virion that acts as a cement protein on the capsid interior and which glue the peripentonal hexons and group-of-nine hexons together. The chain is Pre-hexon-linking protein VIII from Sus scrofa (Pig).